We begin with the raw amino-acid sequence, 232 residues long: Large ribosomal subunit protein uL1 (232 aa).

This sequence belongs to the universal ribosomal protein uL1 family. Part of the 50S ribosomal subunit.

Functionally, binds directly to 23S rRNA. The L1 stalk is quite mobile in the ribosome, and is involved in E site tRNA release. Protein L1 is also a translational repressor protein, it controls the translation of the L11 operon by binding to its mRNA. The sequence is that of Large ribosomal subunit protein uL1 from Maricaulis maris (strain MCS10) (Caulobacter maris).